A 446-amino-acid chain; its full sequence is Phosphoglucosamine mutase (446 aa).

S99 functions as the Phosphoserine intermediate in the catalytic mechanism. S99, D242, D244, and D246 together coordinate Mg(2+). A Phosphoserine modification is found at S99.

It belongs to the phosphohexose mutase family. Mg(2+) serves as cofactor. In terms of processing, activated by phosphorylation.

The catalysed reaction is alpha-D-glucosamine 1-phosphate = D-glucosamine 6-phosphate. Its function is as follows. Catalyzes the conversion of glucosamine-6-phosphate to glucosamine-1-phosphate. This chain is Phosphoglucosamine mutase, found in Campylobacter fetus subsp. fetus (strain 82-40).